The chain runs to 226 residues: 2-C-methyl-D-erythritol 4-phosphate cytidylyltransferase (226 aa).

It belongs to the IspD/TarI cytidylyltransferase family. IspD subfamily.

It carries out the reaction 2-C-methyl-D-erythritol 4-phosphate + CTP + H(+) = 4-CDP-2-C-methyl-D-erythritol + diphosphate. It functions in the pathway isoprenoid biosynthesis; isopentenyl diphosphate biosynthesis via DXP pathway; isopentenyl diphosphate from 1-deoxy-D-xylulose 5-phosphate: step 2/6. In terms of biological role, catalyzes the formation of 4-diphosphocytidyl-2-C-methyl-D-erythritol from CTP and 2-C-methyl-D-erythritol 4-phosphate (MEP). In Synechococcus sp. (strain CC9902), this protein is 2-C-methyl-D-erythritol 4-phosphate cytidylyltransferase.